The chain runs to 279 residues: Malonyl-[acyl-carrier protein] O-methyltransferase (279 aa).

It belongs to the methyltransferase superfamily.

It catalyses the reaction malonyl-[ACP] + S-adenosyl-L-methionine = malonyl-[ACP] methyl ester + S-adenosyl-L-homocysteine. Its pathway is cofactor biosynthesis; biotin biosynthesis. In terms of biological role, converts the free carboxyl group of a malonyl-thioester to its methyl ester by transfer of a methyl group from S-adenosyl-L-methionine (SAM). It allows to synthesize pimeloyl-ACP via the fatty acid synthetic pathway. The chain is Malonyl-[acyl-carrier protein] O-methyltransferase from Hahella chejuensis (strain KCTC 2396).